Reading from the N-terminus, the 281-residue chain is Aldo-keto reductase MMAR_1744 (281 aa).

Catalysis depends on Tyr56, which acts as the Proton donor. NADPH is bound by residues Leu196, Ile234, Ser237, Thr245, Asn246, and Arg272.

Belongs to the aldo/keto reductase family.

In Mycobacterium marinum (strain ATCC BAA-535 / M), this protein is Aldo-keto reductase MMAR_1744.